Consider the following 594-residue polypeptide: P-granule-associated novel protein 1 (594 aa).

Positions 1 to 18 are cleaved as a signal peptide; sequence MRSLLSFVLLALARIAIS. Residues 19–513 lie on the Extracellular side of the membrane; sequence EETKSCIDIE…PEEEEVYRSG (495 aa). LRR repeat units lie at residues 78–101, 103–124, 125–149, 150–173, 175–197, 198–221, 222–245, 246–269, 271–290, 291–315, 318–341, 343–365, 374–397, 399–419, and 420–442; these read GTEL…LFEN, FAKQ…SFQS, LGGS…LFTG, LKSL…AFEE, KKVE…TFDG, MKNL…AFRG, LNSL…IFSA, LKNL…SFPK, EKLV…KLKD, LPSL…MFGL, SDRI…AFQH, PNLI…SPSQ, LKKL…ELPK, LSSL…ALEG, and MEIK…TFDS. Residues 514 to 534 form a helical membrane-spanning segment; that stretch reads WITVAATILTIVTIVIMVIIA. Over 535 to 594 the chain is Cytoplasmic; that stretch reads MLYFKDARYQFPLRGRRSDSDLHKLIENDPLNIASDSILVVPAMPKRNTGPKKTVRFQNF.

Interacts with glh-1. Interacts (via LRR regions) with myrf-1 (via C-terminus); the interaction promotes the role of myrf-1 in the synaptic remodeling of DD GABAergic motor neurons at the cell membrane. Expressed in the germline and somatic cells. In terms of tissue distribution, expressed in the germline and somatic cells. Expressed at higher levels in germline cells relative to somatic cells. As to expression, expressed in germline cells. Highly expressed in the pharynx and at lower levels in the intestine, but not detected in other tissues. Other studies suggest a broader expression pattern in somatic tissues: from embryogenesis to adult stages, expressed strongly in body wall muscle, vulva, somatic gonad and pharynx, at lower levels in the nerve ring, hypodermis, and rectal epithelia, and very weakly in the intestine.

The protein localises to the cytoplasm. It localises to the apical cell membrane. Functionally, regulates diverse developmental processes including larval molting and gonad maturation. Its function is as follows. Promotes the localization of myrf-1 and myrf-2 to the cell membrane. In association with myrf-1, promotes the synaptic remodeling of DD GABAergic motor neurons whereby new synapses form in the dorsal processes of DD neurons. This is P-granule-associated novel protein 1 from Caenorhabditis elegans.